Reading from the N-terminus, the 204-residue chain is Large ribosomal subunit protein eL15 (204 aa).

The disordered stretch occupies residues 161 to 180 (MRGLTSAGKKSRGLGKGHKF). Over residues 169–180 (KKSRGLGKGHKF) the composition is skewed to basic residues.

Belongs to the eukaryotic ribosomal protein eL15 family. Component of the large ribosomal subunit.

It is found in the cytoplasm. Component of the large ribosomal subunit. The ribosome is a large ribonucleoprotein complex responsible for the synthesis of proteins in the cell. The polypeptide is Large ribosomal subunit protein eL15 (rpl15) (Ictalurus punctatus (Channel catfish)).